A 452-amino-acid chain; its full sequence is Probable phosphoglucosamine mutase (452 aa).

The active-site Phosphoserine intermediate is S96. Mg(2+) contacts are provided by S96, D235, D237, and D239. S96 bears the Phosphoserine mark.

The protein belongs to the phosphohexose mutase family. Mg(2+) serves as cofactor. Activated by phosphorylation.

The catalysed reaction is alpha-D-glucosamine 1-phosphate = D-glucosamine 6-phosphate. In terms of biological role, catalyzes the conversion of glucosamine-6-phosphate to glucosamine-1-phosphate. The polypeptide is Probable phosphoglucosamine mutase (Methanopyrus kandleri (strain AV19 / DSM 6324 / JCM 9639 / NBRC 100938)).